A 39-amino-acid chain; its full sequence is Osmotin-like protein (39 aa).

The protein belongs to the thaumatin family. Contains intrachain disulfide bonds.

Functionally, may be an important antifungal protein. This Hevea brasiliensis (Para rubber tree) protein is Osmotin-like protein.